The primary structure comprises 212 residues: NAD(P)H-hydrate epimerase (212 aa).

The YjeF N-terminal domain maps to 11-212 (MRHYDSYTIN…ANDMGTYAVD (202 aa)). Residue 60 to 64 (NNGGD) participates in (6S)-NADPHX binding. Residues asparagine 61 and aspartate 123 each coordinate K(+). (6S)-NADPHX-binding positions include 127–133 (GIGIDRA), tyrosine 138, and aspartate 156. Residue serine 159 coordinates K(+).

This sequence belongs to the NnrE/AIBP family. Requires K(+) as cofactor.

The enzyme catalyses (6R)-NADHX = (6S)-NADHX. It catalyses the reaction (6R)-NADPHX = (6S)-NADPHX. Functionally, catalyzes the epimerization of the S- and R-forms of NAD(P)HX, a damaged form of NAD(P)H that is a result of enzymatic or heat-dependent hydration. This is a prerequisite for the S-specific NAD(P)H-hydrate dehydratase to allow the repair of both epimers of NAD(P)HX. The chain is NAD(P)H-hydrate epimerase from Limosilactobacillus reuteri (strain ATCC 55730 / SD2112) (Lactobacillus reuteri).